The sequence spans 79 residues: MAQQRRGGFKRRKKVDYIAANKIEYVDYKDTELLSRFVSERGKILPRRVTGTSAKNQRKVTXAIKRARVMALMPFVNED.

Belongs to the bacterial ribosomal protein bS18 family. Part of the 30S ribosomal subunit. Forms a tight heterodimer with protein bS6.

Functionally, binds as a heterodimer with protein bS6 to the central domain of the 16S rRNA, where it helps stabilize the platform of the 30S subunit. In Streptococcus pneumoniae serotype 19F (strain G54), this protein is Small ribosomal subunit protein bS18.